Reading from the N-terminus, the 255-residue chain is MLPAERKRRIVELVSDSDGRSVESLSDHLGYSKATIRRDLRELEDRGLIERSHGGAVPVTSVGREQTYGQKEVQNLEGKRAIADRAVEELAEGQVVFFDAGTTTMEVARKVPKDGTILGVTNSPRLAIELNEEDNEVKLTGGTLRRRTKALVGPTAESFMERTNFDLLFLGTNALDVESGLTTPNEDEARMKELMVEKAAKVVLVADLSKLGRRSFVQFASLEEIDLFITDGTLDADSREEIESAGVTVVDGVAR.

The 56-residue stretch at 3-58 (PAERKRRIVELVSDSDGRSVESLSDHLGYSKATIRRDLRELEDRGLIERSHGGAVP) folds into the HTH deoR-type domain. Residues 20–39 (RSVESLSDHLGYSKATIRRD) constitute a DNA-binding region (H-T-H motif).

Transcriptional repressor of genes encoding both fructose and glucose metabolic enzymes such as phosphofructokinase (PFK) or 2-keto-3-deoxy-D-gluconate kinase (KDGK) during growth on glycerol. Required for the glycerol-mediated repression of pfkB-specific transcripts, but not needed for the high-levels of the pfkB-specific transcript present when cells are grown on fructose. The polypeptide is HTH-type transcriptional regulator GlpR (glpR) (Haloferax volcanii (strain ATCC 29605 / DSM 3757 / JCM 8879 / NBRC 14742 / NCIMB 2012 / VKM B-1768 / DS2) (Halobacterium volcanii)).